A 248-amino-acid chain; its full sequence is Acetylglutamate kinase (248 aa).

Substrate-binding positions include 41–42 (GG), arginine 63, and asparagine 155.

Belongs to the acetylglutamate kinase family. ArgB subfamily.

The protein localises to the cytoplasm. It catalyses the reaction N-acetyl-L-glutamate + ATP = N-acetyl-L-glutamyl 5-phosphate + ADP. It participates in amino-acid biosynthesis; L-arginine biosynthesis; N(2)-acetyl-L-ornithine from L-glutamate: step 2/4. Functionally, catalyzes the ATP-dependent phosphorylation of N-acetyl-L-glutamate. This Lactiplantibacillus plantarum (strain ATCC BAA-793 / NCIMB 8826 / WCFS1) (Lactobacillus plantarum) protein is Acetylglutamate kinase.